The following is a 71-amino-acid chain: Heat-stable enterotoxin A (71 aa).

Positions 1-19 are cleaved as a signal peptide; sequence MKKIVFVLVLMLSSFGAFG. Positions 20-53 are excised as a propeptide; that stretch reads QETVSGQFSDALSTPITAEVYKQACDPPLPPAEV. 3 disulfide bridges follow: Cys-59–Cys-64, Cys-60–Cys-68, and Cys-63–Cys-71.

The protein belongs to the heat-stable enterotoxin family.

Its subcellular location is the secreted. Its function is as follows. Toxin which activates the particulate form of guanylate cyclase and increases cyclic GMP levels within the host intestinal epithelial cells. In Yersinia enterocolitica, this protein is Heat-stable enterotoxin A (ystA).